A 947-amino-acid chain; its full sequence is Serine-aspartate repeat-containing protein C (947 aa).

The signal sequence occupies residues methionine 1 to alanine 50. The interval alanine 51–lysine 164 is disordered. The segment at alanine 51–lysine 495 is ligand binding A region. A compositionally biased stretch (polar residues) spans glycine 56 to asparagine 71. A compositionally biased stretch (basic and acidic residues) spans lysine 72 to lysine 83. Over residues aspartate 84–serine 155 the composition is skewed to polar residues. CNA-B domains follow at residues lysine 496–proline 606 and lysine 607–threonine 717. Residues threonine 678–glycine 927 form a disordered region. Acidic residues-rich tracts occupy residues threonine 685–glutamate 695 and tyrosine 712–serine 886. The LPXTG sorting signal signature appears at leucine 910 to glycine 914. The span at glutamate 912–glycine 927 shows a compositional bias: low complexity. Residue threonine 913 is modified to Pentaglycyl murein peptidoglycan amidated threonine. Residues glycine 914–lysine 947 constitute a propeptide, removed by sortase.

The protein belongs to the serine-aspartate repeat-containing protein (SDr) family. As to quaternary structure, homodimerizes; via N2-Domain. Interacts with host NRXN1; this interaction mediates bacterial attachment to host cells.

It localises to the secreted. The protein resides in the cell wall. Functionally, cell surface-associated calcium-binding protein which plays an important role in adhesion and pathogenesis. Mediates interactions with components of the extracellular matrix such as host NRXN1 to promote bacterial adhesion. This chain is Serine-aspartate repeat-containing protein C (sdrC), found in Staphylococcus aureus (strain USA300).